A 140-amino-acid polypeptide reads, in one-letter code: Profilin-1 (140 aa).

N-acetylalanine is present on Ala2. Phosphoserine is present on Ser28. A Glycyl lysine isopeptide (Lys-Gly) (interchain with G-Cter in SUMO2); alternate cross-link involves residue Lys54. Residue Lys54 forms a Glycyl lysine isopeptide (Lys-Gly) (interchain with G-Cter in ubiquitin); alternate linkage. Ser57 carries the post-translational modification Phosphoserine. An N6-acetyllysine modification is found at Lys108. Tyr129 carries the phosphotyrosine modification. Ser138 carries the phosphoserine; by ROCK1 modification.

The protein belongs to the profilin family. As to quaternary structure, found in a complex with XPO6, Ran, ACTB and PFN1. Interacts with ACTB. Interacts with VASP. Interacts with HTT. Interacts with SH3BGRL. Occurs in many kinds of cells as a complex with monomeric actin in a 1:1 ratio. Interacts with ACTMAP. In terms of processing, phosphorylation at Ser-138 reduces its affinity for G-actin and blocks its interaction with HTT, reducing its ability to inhibit androgen receptor (AR) and HTT aggregation.

It localises to the cytoplasm. The protein resides in the cytoskeleton. Binds to actin and affects the structure of the cytoskeleton. At high concentrations, profilin prevents the polymerization of actin, whereas it enhances it at low concentrations. By binding to PIP2, it inhibits the formation of IP3 and DG. Inhibits androgen receptor (AR) and HTT aggregation and binding of G-actin is essential for its inhibition of AR. This chain is Profilin-1 (Pfn1), found in Mus musculus (Mouse).